Consider the following 1407-residue polypeptide: DNA-directed RNA polymerase subunit beta' (1407 aa).

4 residues coordinate Zn(2+): C70, C72, C85, and C88. D460, D462, and D464 together coordinate Mg(2+). 4 residues coordinate Zn(2+): C814, C889, C896, and C899. Positions 1384–1407 are disordered; sequence LVGRSTSSGTEVTSPSKDAIPLGG. Residues 1386–1399 show a composition bias toward polar residues; the sequence is GRSTSSGTEVTSPS.

Belongs to the RNA polymerase beta' chain family. In terms of assembly, the RNAP catalytic core consists of 2 alpha, 1 beta, 1 beta' and 1 omega subunit. When a sigma factor is associated with the core the holoenzyme is formed, which can initiate transcription. Requires Mg(2+) as cofactor. It depends on Zn(2+) as a cofactor.

The enzyme catalyses RNA(n) + a ribonucleoside 5'-triphosphate = RNA(n+1) + diphosphate. Its function is as follows. DNA-dependent RNA polymerase catalyzes the transcription of DNA into RNA using the four ribonucleoside triphosphates as substrates. The chain is DNA-directed RNA polymerase subunit beta' from Xylella fastidiosa (strain Temecula1 / ATCC 700964).